Here is a 110-residue protein sequence, read N- to C-terminus: Large ribosomal subunit protein uL22 (110 aa).

This sequence belongs to the universal ribosomal protein uL22 family. In terms of assembly, part of the 50S ribosomal subunit.

This protein binds specifically to 23S rRNA; its binding is stimulated by other ribosomal proteins, e.g. L4, L17, and L20. It is important during the early stages of 50S assembly. It makes multiple contacts with different domains of the 23S rRNA in the assembled 50S subunit and ribosome. In terms of biological role, the globular domain of the protein is located near the polypeptide exit tunnel on the outside of the subunit, while an extended beta-hairpin is found that lines the wall of the exit tunnel in the center of the 70S ribosome. The protein is Large ribosomal subunit protein uL22 of Pseudoalteromonas atlantica (strain T6c / ATCC BAA-1087).